Consider the following 618-residue polypeptide: UvrABC system protein C (618 aa).

The GIY-YIG domain occupies 19–97; sequence SEPGIYRMLD…IKALRPKYNV (79 aa). Residues 208–243 form the UVR domain; that stretch reads QIILDALAERMKQAVNQLNFEEAAVLRDQIKNLRLI.

This sequence belongs to the UvrC family. Interacts with UvrB in an incision complex.

The protein resides in the cytoplasm. Its function is as follows. The UvrABC repair system catalyzes the recognition and processing of DNA lesions. UvrC both incises the 5' and 3' sides of the lesion. The N-terminal half is responsible for the 3' incision and the C-terminal half is responsible for the 5' incision. This Legionella pneumophila (strain Paris) protein is UvrABC system protein C.